The chain runs to 240 residues: 1-acyl-sn-glycerol-3-phosphate acyltransferase (240 aa).

An HXXXXD motif motif is present at residues 73 to 78 (HQNNYD).

This sequence belongs to the 1-acyl-sn-glycerol-3-phosphate acyltransferase family.

The protein resides in the cell inner membrane. It carries out the reaction a 1-acyl-sn-glycero-3-phosphate + an acyl-CoA = a 1,2-diacyl-sn-glycero-3-phosphate + CoA. It participates in phospholipid metabolism; CDP-diacylglycerol biosynthesis; CDP-diacylglycerol from sn-glycerol 3-phosphate: step 2/3. In terms of biological role, converts lysophosphatidic acid (LPA) into phosphatidic acid by incorporating acyl moiety at the 2 position. The chain is 1-acyl-sn-glycerol-3-phosphate acyltransferase (plsC) from Haemophilus influenzae (strain ATCC 51907 / DSM 11121 / KW20 / Rd).